The chain runs to 109 residues: MTETEFLALVEQVLDSVERMADDWAAEQDLDIEANRSGNVLTLVFEDGTHVVINSQAAMQELWLASRSGGFHYRFDGQRWNDTRGGPGFVDALSQVCSAAAGVPLTVRL.

This sequence belongs to the frataxin family.

Involved in iron-sulfur (Fe-S) cluster assembly. May act as a regulator of Fe-S biogenesis. This is Iron-sulfur cluster assembly protein CyaY from Bordetella avium (strain 197N).